The chain runs to 261 residues: Type III pantothenate kinase (261 aa).

ATP is bound at residue 6–13; sequence DAGNSNIT. Residues Y100 and 107 to 110 each bind substrate; that span reads GADR. Catalysis depends on D109, which acts as the Proton acceptor. Position 129 (D129) interacts with K(+). T132 lines the ATP pocket. T184 contributes to the substrate binding site.

This sequence belongs to the type III pantothenate kinase family. In terms of assembly, homodimer. It depends on NH4(+) as a cofactor. K(+) serves as cofactor.

The protein resides in the cytoplasm. The enzyme catalyses (R)-pantothenate + ATP = (R)-4'-phosphopantothenate + ADP + H(+). Its pathway is cofactor biosynthesis; coenzyme A biosynthesis; CoA from (R)-pantothenate: step 1/5. Catalyzes the phosphorylation of pantothenate (Pan), the first step in CoA biosynthesis. In Solibacter usitatus (strain Ellin6076), this protein is Type III pantothenate kinase.